A 274-amino-acid polypeptide reads, in one-letter code: Orotidine 5'-phosphate decarboxylase (274 aa).

The active-site Proton donor is the Lys-96.

This sequence belongs to the OMP decarboxylase family. Type 2 subfamily.

The enzyme catalyses orotidine 5'-phosphate + H(+) = UMP + CO2. The protein operates within pyrimidine metabolism; UMP biosynthesis via de novo pathway; UMP from orotate: step 2/2. This Bacteroides fragilis (strain YCH46) protein is Orotidine 5'-phosphate decarboxylase.